A 102-amino-acid polypeptide reads, in one-letter code: Bowman-Birk type wound-induced proteinase inhibitor WIP1 (102 aa).

The signal sequence occupies residues 1-15; the sequence is MKSSPHLVLILCLQA. 5 cysteine pairs are disulfide-bonded: cysteine 46–cysteine 102, cysteine 47–cysteine 60, cysteine 50–cysteine 98, cysteine 67–cysteine 74, and cysteine 71–cysteine 90.

This sequence belongs to the Bowman-Birk serine protease inhibitor family.

The chain is Bowman-Birk type wound-induced proteinase inhibitor WIP1 (WIP1) from Zea mays (Maize).